A 281-amino-acid polypeptide reads, in one-letter code: MSDNYVLVDPLSSKPIDCWKKYVKQGRVCEPIKPMRLDTPIFENKVRFVCISDTHEKLHEILPYIPDGDVLIHSGDFTNCGDIGEVIKFNAEIGSLPHKHKIVIAGNHELGFEDGEEMSERQLAGLNMLGINKAYELLSNCTYLCDKSYEAYGLKIYGAPWHSMPGYSFFRQRGQKILHKWNQIPAKIDVLMTHTPPLGHGDFNAWDKMDGILCGCAELLNTVEQRVKPKYHVFGHVHQKHGVTTNGETTFINAALCDHKLRSAYDPIIFDIPLPPGKTKQ.

This sequence belongs to the UPF0046 family.

The protein is UPF0046 protein C25E10.12 of Caenorhabditis elegans.